A 605-amino-acid polypeptide reads, in one-letter code: Elongation factor 4 (605 aa).

In terms of domain architecture, tr-type G spans 11–193 (KNIRNFSIIA…TLVDVIPAPT (183 aa)). GTP is bound by residues 23-28 (DHGKST) and 140-143 (NKID).

The protein belongs to the TRAFAC class translation factor GTPase superfamily. Classic translation factor GTPase family. LepA subfamily.

The protein resides in the cell inner membrane. The enzyme catalyses GTP + H2O = GDP + phosphate + H(+). Required for accurate and efficient protein synthesis under certain stress conditions. May act as a fidelity factor of the translation reaction, by catalyzing a one-codon backward translocation of tRNAs on improperly translocated ribosomes. Back-translocation proceeds from a post-translocation (POST) complex to a pre-translocation (PRE) complex, thus giving elongation factor G a second chance to translocate the tRNAs correctly. Binds to ribosomes in a GTP-dependent manner. This is Elongation factor 4 from Acinetobacter baumannii (strain AB307-0294).